Consider the following 180-residue polypeptide: Cytokinin-beta-glucosidase 2 (180 aa).

Hydrolyzes cytokinin glucosides thus liberating free cytokinins. This Panax ginseng (Korean ginseng) protein is Cytokinin-beta-glucosidase 2 (ROLC2).